Reading from the N-terminus, the 258-residue chain is Serine/arginine-rich splicing factor x16 (258 aa).

The RRM domain occupies 8 to 81; that stretch reads RKVYVGDLGN…RRARVELSTG (74 aa). Disordered regions lie at residues 81-113 and 130-258; these read GKYA…GGRG and CRER…VSRD. Residues 86-103 are compositionally biased toward gly residues; that stretch reads SGGGGGGGGGGGGGGGLG. Over residues 104–113 the composition is skewed to basic and acidic residues; sequence GRDRGGGGRG. Residues 116–132 form a CCHC-type zinc finger; sequence KCYECGGRGHFARHCRE. 2 stretches are compositionally biased toward basic residues: residues 130-141 and 149-166; these read CRERKARQRRRS and STSR…RSRS. 2 stretches are compositionally biased toward basic and acidic residues: residues 180–197 and 210–221; these read NGRD…HERN and RRYEDEDDDRVR. Low complexity-rich tracts occupy residues 231–240 and 249–258; these read RSASPAVRRG and SSASRSVSRD.

Interacts (via Arg/Ser-rich region) with Alsin2/CG7564, Rbp1 and Doa (via N-terminus). In terms of processing, highly phosphorylated. May be phosphorylated by the serine/threonine-protein kinase Doa.

The protein localises to the nucleus. Its function is as follows. Serine/arginine-rich splicing factor (SR protein) involved in differential exon usage during RNA transcript processing, probably by binding exonic splicing enhancer elements and recruiting components of the splicing machinery. Binds RNA stem-loop structures with consensus sequence 5'-CCGUNUNKNW-3'. Regulator of genes involved in lipid and carbohydrate metabolism, the immune response and the response to xenobiotics. The sequence is that of Serine/arginine-rich splicing factor x16 from Drosophila melanogaster (Fruit fly).